Reading from the N-terminus, the 116-residue chain is Protein cop (116 aa).

Putative control of replication message. The protein is Protein cop (cop) of Staphylococcus aureus.